The chain runs to 366 residues: Carbamoyl phosphate synthase small chain (366 aa).

Positions 1-172 (MYGILVLEDG…TYNAENEKTS (172 aa)) are CPSase. L-glutamine contacts are provided by serine 45, glycine 220, and glycine 222. One can recognise a Glutamine amidotransferase type-1 domain in the interval 172 to 363 (SCVLIDCGVK…VELGIKFKAE (192 aa)). Cysteine 247 functions as the Nucleophile in the catalytic mechanism. L-glutamine is bound by residues leucine 248, glutamine 251, asparagine 289, glycine 291, and phenylalanine 292. Active-site residues include histidine 336 and glutamate 338.

Belongs to the CarA family. In terms of assembly, composed of two chains; the small (or glutamine) chain promotes the hydrolysis of glutamine to ammonia, which is used by the large (or ammonia) chain to synthesize carbamoyl phosphate. Tetramer of heterodimers (alpha,beta)4.

It carries out the reaction hydrogencarbonate + L-glutamine + 2 ATP + H2O = carbamoyl phosphate + L-glutamate + 2 ADP + phosphate + 2 H(+). The catalysed reaction is L-glutamine + H2O = L-glutamate + NH4(+). Its pathway is amino-acid biosynthesis; L-arginine biosynthesis; carbamoyl phosphate from bicarbonate: step 1/1. The protein operates within pyrimidine metabolism; UMP biosynthesis via de novo pathway; (S)-dihydroorotate from bicarbonate: step 1/3. Small subunit of the glutamine-dependent carbamoyl phosphate synthetase (CPSase). CPSase catalyzes the formation of carbamoyl phosphate from the ammonia moiety of glutamine, carbonate, and phosphate donated by ATP, constituting the first step of 2 biosynthetic pathways, one leading to arginine and/or urea and the other to pyrimidine nucleotides. The small subunit (glutamine amidotransferase) binds and cleaves glutamine to supply the large subunit with the substrate ammonia. This chain is Carbamoyl phosphate synthase small chain, found in Methanococcus maripaludis (strain C7 / ATCC BAA-1331).